Reading from the N-terminus, the 261-residue chain is Guanine nucleotide exchange factor BopE (261 aa).

This sequence belongs to the GEF (guanine exchange factor) SopE family. Monomer. Interacts with human CDC42.

The protein resides in the secreted. Functionally, activator for both CDC42 and RAC1 by directly interacting with these Rho GTPases and acting as a guanine nucleotide exchange factor (GEF). This activation results in actin cytoskeleton rearrangements and stimulates membrane ruffling, thus promoting bacterial entry into non-phagocytic cells. This chain is Guanine nucleotide exchange factor BopE (bopE), found in Burkholderia mallei (strain NCTC 10247).